Consider the following 249-residue polypeptide: 15,16-dihydrobiliverdin:ferredoxin oxidoreductase (249 aa).

Belongs to the HY2 family.

It carries out the reaction 15,16-dihydrobiliverdin + oxidized 2[4Fe-4S]-[ferredoxin] = biliverdin IXalpha + reduced 2[4Fe-4S]-[ferredoxin] + 2 H(+). Functionally, catalyzes the two-electron reduction of biliverdin IX-alpha at the C15 methine bridge. The protein is 15,16-dihydrobiliverdin:ferredoxin oxidoreductase of Prochlorococcus marinus (strain MIT 9303).